Reading from the N-terminus, the 376-residue chain is Erythronate-4-phosphate dehydrogenase (376 aa).

Substrate is bound by residues Ser45 and Thr67. Position 147 (Asp147) interacts with NAD(+). Arg209 is an active-site residue. Asp233 provides a ligand contact to NAD(+). The active site involves Glu238. His255 serves as the catalytic Proton donor. Gly258 is a binding site for NAD(+). Tyr259 is a binding site for substrate.

This sequence belongs to the D-isomer specific 2-hydroxyacid dehydrogenase family. PdxB subfamily. Homodimer.

Its subcellular location is the cytoplasm. It catalyses the reaction 4-phospho-D-erythronate + NAD(+) = (R)-3-hydroxy-2-oxo-4-phosphooxybutanoate + NADH + H(+). Its pathway is cofactor biosynthesis; pyridoxine 5'-phosphate biosynthesis; pyridoxine 5'-phosphate from D-erythrose 4-phosphate: step 2/5. Functionally, catalyzes the oxidation of erythronate-4-phosphate to 3-hydroxy-2-oxo-4-phosphonooxybutanoate. This Shewanella baltica (strain OS155 / ATCC BAA-1091) protein is Erythronate-4-phosphate dehydrogenase.